The primary structure comprises 557 residues: Dihydroxy-acid dehydratase (557 aa).

A Mg(2+)-binding site is contributed by aspartate 78. Cysteine 119 lines the [2Fe-2S] cluster pocket. Residues aspartate 120 and lysine 121 each contribute to the Mg(2+) site. Residue lysine 121 is modified to N6-carboxylysine. Cysteine 192 contacts [2Fe-2S] cluster. Glutamate 442 provides a ligand contact to Mg(2+). The active-site Proton acceptor is serine 468.

The protein belongs to the IlvD/Edd family. In terms of assembly, homodimer. The cofactor is [2Fe-2S] cluster. Requires Mg(2+) as cofactor.

It carries out the reaction (2R)-2,3-dihydroxy-3-methylbutanoate = 3-methyl-2-oxobutanoate + H2O. It catalyses the reaction (2R,3R)-2,3-dihydroxy-3-methylpentanoate = (S)-3-methyl-2-oxopentanoate + H2O. It functions in the pathway amino-acid biosynthesis; L-isoleucine biosynthesis; L-isoleucine from 2-oxobutanoate: step 3/4. It participates in amino-acid biosynthesis; L-valine biosynthesis; L-valine from pyruvate: step 3/4. Functions in the biosynthesis of branched-chain amino acids. Catalyzes the dehydration of (2R,3R)-2,3-dihydroxy-3-methylpentanoate (2,3-dihydroxy-3-methylvalerate) into 2-oxo-3-methylpentanoate (2-oxo-3-methylvalerate) and of (2R)-2,3-dihydroxy-3-methylbutanoate (2,3-dihydroxyisovalerate) into 2-oxo-3-methylbutanoate (2-oxoisovalerate), the penultimate precursor to L-isoleucine and L-valine, respectively. This Bacillus cereus (strain ATCC 10987 / NRS 248) protein is Dihydroxy-acid dehydratase.